Consider the following 185-residue polypeptide: Elongation factor P (185 aa).

The protein belongs to the elongation factor P family.

The protein resides in the cytoplasm. It participates in protein biosynthesis; polypeptide chain elongation. In terms of biological role, involved in peptide bond synthesis. Stimulates efficient translation and peptide-bond synthesis on native or reconstituted 70S ribosomes in vitro. Probably functions indirectly by altering the affinity of the ribosome for aminoacyl-tRNA, thus increasing their reactivity as acceptors for peptidyl transferase. The sequence is that of Elongation factor P (efp) from Lactococcus lactis subsp. lactis (strain IL1403) (Streptococcus lactis).